Consider the following 465-residue polypeptide: 6-phospho-beta-glucosidase (465 aa).

E173 acts as the Proton donor in catalysis. Residue E362 is the Nucleophile of the active site.

This sequence belongs to the glycosyl hydrolase 1 family.

It catalyses the reaction 6-phospho-beta-D-glucosyl-(1-&gt;4)-D-glucose + H2O = D-glucose 6-phosphate + D-glucose. The protein operates within carbohydrate metabolism; beta-glucoside metabolism. The chain is 6-phospho-beta-glucosidase (arbB) from Dickeya chrysanthemi (Pectobacterium chrysanthemi).